The chain runs to 118 residues: Large ribosomal subunit protein uL18 (118 aa).

The protein belongs to the universal ribosomal protein uL18 family. Part of the 50S ribosomal subunit; part of the 5S rRNA/L5/L18/L25 subcomplex. Contacts the 5S and 23S rRNAs.

Its function is as follows. This is one of the proteins that bind and probably mediate the attachment of the 5S RNA into the large ribosomal subunit, where it forms part of the central protuberance. This Wolinella succinogenes (strain ATCC 29543 / DSM 1740 / CCUG 13145 / JCM 31913 / LMG 7466 / NCTC 11488 / FDC 602W) (Vibrio succinogenes) protein is Large ribosomal subunit protein uL18.